A 608-amino-acid polypeptide reads, in one-letter code: Probable potassium transport system protein Kup (608 aa).

Helical transmembrane passes span 9 to 29 (LSGVTLAAIGVVYGDIGTSPL), 46 to 66 (PAAILGFLSLIFWLLILVVSV), 99 to 119 (TPVLIILGLIGGSFFYGEVVI), 137 to 157 (PSLDPYIVPLSVLVLTLLFAI), 165 to 185 (VGKLFAPIMLTWFLTLAVLGL), 213 to 233 (TSFFALGAVVLAITGVEALYA), 247 to 267 (WFVVVLPSLVLNYFGQGALLL), 285 to 305 (ALLPLLVLATMATVIASQAVI), 337 to 357 (IYIPVINWILYISVVIVIMSF), 363 to 383 (LAAAYGIAVTGTMVLTSILFC), 396 to 416 (LVAALFALLLAIDVPLFAANL), and 419 to 439 (IFSGGWLPLTLGAVMFTLMTS).

The protein belongs to the HAK/KUP transporter (TC 2.A.72) family.

The protein resides in the cell inner membrane. It carries out the reaction K(+)(in) + H(+)(in) = K(+)(out) + H(+)(out). In terms of biological role, transport of potassium into the cell. Likely operates as a K(+):H(+) symporter. In Aeromonas salmonicida (strain A449), this protein is Probable potassium transport system protein Kup.